The primary structure comprises 351 residues: Histidinol-phosphate aminotransferase (351 aa).

At Lys-221 the chain carries N6-(pyridoxal phosphate)lysine.

This sequence belongs to the class-II pyridoxal-phosphate-dependent aminotransferase family. Histidinol-phosphate aminotransferase subfamily. In terms of assembly, homodimer. It depends on pyridoxal 5'-phosphate as a cofactor.

It carries out the reaction L-histidinol phosphate + 2-oxoglutarate = 3-(imidazol-4-yl)-2-oxopropyl phosphate + L-glutamate. It functions in the pathway amino-acid biosynthesis; L-histidine biosynthesis; L-histidine from 5-phospho-alpha-D-ribose 1-diphosphate: step 7/9. The sequence is that of Histidinol-phosphate aminotransferase from Staphylococcus haemolyticus (strain JCSC1435).